The chain runs to 505 residues: Glutamate--tRNA ligase (505 aa).

The 'HIGH' region signature appears at 12–22 (PSPTGALHIGG). The short motif at 260 to 264 (KLSKR) is the 'KMSKS' region element. Lys-263 contacts ATP.

This sequence belongs to the class-I aminoacyl-tRNA synthetase family. Glutamate--tRNA ligase type 1 subfamily. As to quaternary structure, monomer.

It is found in the cytoplasm. It carries out the reaction tRNA(Glu) + L-glutamate + ATP = L-glutamyl-tRNA(Glu) + AMP + diphosphate. Catalyzes the attachment of glutamate to tRNA(Glu) in a two-step reaction: glutamate is first activated by ATP to form Glu-AMP and then transferred to the acceptor end of tRNA(Glu). The protein is Glutamate--tRNA ligase of Phocaeicola vulgatus (strain ATCC 8482 / DSM 1447 / JCM 5826 / CCUG 4940 / NBRC 14291 / NCTC 11154) (Bacteroides vulgatus).